A 446-amino-acid polypeptide reads, in one-letter code: Chromosomal replication initiator protein DnaA (446 aa).

The segment at 1 to 82 is domain I, interacts with DnaA modulators; that stretch reads MENILDLWNQ…ELSIKFVIPQ (82 aa). The interval 83-103 is domain II; sequence NQDVEDFMPKPQVKKAVKEDT. The tract at residues 104 to 332 is domain III, AAA+ region; the sequence is SDFPQNMLNP…VAYSSLINKD (229 aa). Residues glycine 154, leucine 155, glycine 156, lysine 157, and threonine 158 each contribute to the ATP site. Residue threonine 158 participates in Mg(2+) binding. The short motif at 182–206 is the Initiator specific motif (ISM) element; the sequence is SEKFTNEFINSIRDNKAVDFRNRYR. Mg(2+) is bound by residues aspartate 214 and aspartate 215. The segment at 333 to 346 is linker; it reads INADLAAEALKDII. A domain IV, binds dsDNA region spans residues 347–446; sequence PSSKPKVITI…HVKEIKEQLK (100 aa).

It belongs to the DnaA family. As to quaternary structure, the DNA replisome assembles sequentially on oriC in this order; DnaA, DnaD, DnaB, DnaI-DnaC helicase. Oligomerizes as a right-handed, spiral filament on DNA at oriC. Forms an ATP-dependent helix on DNA at oriC; both DnaD and YabA inhibit formation of the DnaA helix. Forms an ATP-dependent oligomer, formation is stimulated by ds- and ssDNA; monomeric ADP-Soj inhibits oligomer formation. Interacts with DnaD. Interacts with YabA, and via YabA, with the replication machinery subunit beta sliding clamp DnaN. Interacts with YabA via domain IIIa (residues 109-275). Isolated domain I forms a 1:1 complex with SirA. Interacts with Soj, probably via domain III. Interacts via domains I and III with CcrZ. Interacts via domain IV with skin prophage-like element protein YqaH.

The protein resides in the cytoplasm. The protein localises to the nucleoid. It carries out the reaction ATP + H2O = ADP + phosphate + H(+). Oligomerization of DnaA can be controlled by Soj; monomeric ADP-Soj inhibits formation of the DnaA helix. YabA prevents the cooperative binding of DnaA-ATP to oriC-containing sequences; increased levels of DnaN (beta sliding clamp subunit of DNA polymerase) removes YabA from association with DnaA on the chromosome, enabling increased association of DnaA with its chromosomal binding sites. Both Soj and YabA chase DnaA from oriC site, YabA tethers DnaA to the DNA replication fork via the beta sliding clamp subunit DnaN. SirA antagonizes the ability of DnaA to bind to the replication origin, and thus decreases replication inititation during sporulation. Small protein YqaH, part of the skin prophage-like element, binds to DnaA and antagonizes its replication initiation and transcriptional regulation activities. Plays an essential role in the initiation and regulation of chromosomal replication. ATP-DnaA binds to the origin of replication (oriC) to initiate formation of the DNA replication initiation complex once per cell cycle. Binds directly to oriC at a 9 bp consensus (DnaA box): 5'-TTATCCACA-3' and separates the double-stranded (ds)DNA. Forms a right-handed helical filament on oriC DNA; dsDNA binds to the exterior of the filament while single-stranded (ss)DNA is stabilized in the filament's interior. The ATP-DnaA-oriC complex binds and stabilizes one strand of the AT-rich DNA unwinding element (DUE or basal unwinding system, BUS), permitting loading of DNA polymerase. Binds ATP with high affinity, ADP with lower affinity, but not AMP, cAMP or cGMP; ATP stimulates binding to DnaA boxes. Once bound promotes sequence-specific strand separation of DnaA-trios (3'-GAT-5' consensus) adjacent to oriC in the presence of ATP but not ADP. Domains III and IV are sufficient to separate dsDNA strands. The 'initiator specific motif' (ISM) of domain III contacts the middle adenine residue of the DnaA-trio probably stretching and stabilizing ssDNA. DnaA-trio recognition is co-operative and depends on DnaA self-assembly. The ssDNA serves as an assembly region for the replication machinery. Tethered to DnaN (beta sliding clamp subunit of DNA polymerase) and thus replication forks by YabA. During replication initiation DnaA-ATP binds cooperatively to sequences in oriC. YabA prevents this cooperative binding while still allowing DnaA to bind DNA. During the cell cycle an initial phase occurs in which DnaA is associated with origin regions, then the origin regions become spatially separate from the centrally sequestered DnaA molecules, and most DnaA molecules are unable to reassociate with origin regions. Does not require YabA to bind DNA. During sporulation SirA prevents DnaA association with the replication origin to prevent excessive chromosome replication. Overexpression induces the SOS response; increasing expression of downstream dnaN blocks this induction. Over-initiation of DNA replication is very deleterious; isolated suppressors in relA, ndrR, dnaC, cshA and crrZ increase replication elongation, decrease replication inititation or lead to a decrease in the replicative DNA helicase. Binds acidic phospholipids. In terms of biological role, the half-life of ADP-DnaA is 1.5 minutes, of ATP-DnaA is 5 minutes at 37 degrees Celsius; in E.coli the half-life of ADP-DnaA is about 45 minutes. Functionally, also acts as a transcriptional regulator. DnaA inhibits its own gene expression. DnaA binds specifically to the promoter regions of at least 20 operons (56 genes), including itself, sda and dnaB, and probably controls their expression in response to DNA replication inhibition. This is Chromosomal replication initiator protein DnaA from Bacillus subtilis (strain 168).